A 239-amino-acid chain; its full sequence is Small ribosomal subunit protein eS4 (239 aa).

Residues 37 to 99 (IPLAVVIRDY…ADLYFRVIPD (63 aa)) enclose the S4 RNA-binding domain.

Belongs to the eukaryotic ribosomal protein eS4 family.

This is Small ribosomal subunit protein eS4 from Saccharolobus islandicus (strain Y.N.15.51 / Yellowstone #2) (Sulfolobus islandicus).